The following is a 387-amino-acid chain: uncharacterized protein (387 aa).

It localises to the mitochondrion. This is an uncharacterized protein from Paramecium tetraurelia.